A 187-amino-acid chain; its full sequence is Orotate phosphoribosyltransferase (187 aa).

5-phospho-alpha-D-ribose 1-diphosphate is bound by residues Arg-98, Lys-99, Lys-102, His-104, and 128–136 (EDVTTTGGS). Orotate contacts are provided by Thr-132 and Arg-160.

The protein belongs to the purine/pyrimidine phosphoribosyltransferase family. PyrE subfamily. In terms of assembly, homodimer. Mg(2+) is required as a cofactor.

It carries out the reaction orotidine 5'-phosphate + diphosphate = orotate + 5-phospho-alpha-D-ribose 1-diphosphate. It participates in pyrimidine metabolism; UMP biosynthesis via de novo pathway; UMP from orotate: step 1/2. Its function is as follows. Catalyzes the transfer of a ribosyl phosphate group from 5-phosphoribose 1-diphosphate to orotate, leading to the formation of orotidine monophosphate (OMP). The protein is Orotate phosphoribosyltransferase of Rhodopseudomonas palustris (strain BisB5).